Consider the following 502-residue polypeptide: Glycerol kinase (502 aa).

T14 provides a ligand contact to ADP. Residues T14, T15, and S16 each contribute to the ATP site. T14 contributes to the sn-glycerol 3-phosphate binding site. R18 provides a ligand contact to ADP. Sn-glycerol 3-phosphate contacts are provided by R84, E85, Y136, and D246. The glycerol site is built by R84, E85, Y136, D246, and Q247. 2 residues coordinate ADP: T268 and G311. T268, G311, Q315, and G412 together coordinate ATP. Residues G412 and N416 each coordinate ADP.

The protein belongs to the FGGY kinase family. As to quaternary structure, homotetramer and homodimer (in equilibrium). Heterodimer with EIIA-Glc. Binds 1 zinc ion per glycerol kinase EIIA-Glc dimer. The zinc ion is important for dimerization.

It catalyses the reaction glycerol + ATP = sn-glycerol 3-phosphate + ADP + H(+). The protein operates within polyol metabolism; glycerol degradation via glycerol kinase pathway; sn-glycerol 3-phosphate from glycerol: step 1/1. With respect to regulation, activity of this regulatory enzyme is affected by several metabolites. Allosterically and non-competitively inhibited by fructose 1,6-bisphosphate (FBP) and unphosphorylated phosphocarrier protein EIIA-Glc (III-Glc), an integral component of the bacterial phosphotransferase (PTS) system. Its function is as follows. Key enzyme in the regulation of glycerol uptake and metabolism. Catalyzes the phosphorylation of glycerol to yield sn-glycerol 3-phosphate. This chain is Glycerol kinase, found in Escherichia coli O127:H6 (strain E2348/69 / EPEC).